Here is a 713-residue protein sequence, read N- to C-terminus: MLNKIISKTISLPEHREITIETGKLAKQADGSVVVRMGDTMLLATVVFKQELDPTVDFLPLHVEYQEKFAAAGKIPGGFLRREGKLGDHEVLISRLVDRAIRPLFPDNYKHETQINIFLISADPEILPESLAGLAASAALMISPIPFEGPISEVRVARIDGQFVVNPTQSALEKADIDLMVGGSEKNILMVEGEMDEVQEADIIAAIQFAHEAIKLQCQVQKELADAVATLKFEAEPLQETENFELKDRTFKALYDKVYATAKKGITNKHLRKSSFKQIKKEYLKELLQQDPETSTVHFDKYYYELEKQVVRDLALNEGLRLDGRKLDEIRAIESEIDYLPAAHGSSLFTRGETQSLTTVTLGTKLDEQLIDRALLNGYSRFMLHYNFPSFSTGEVKFNRGPGRREIGHGHLAMRALKKVLPLDTENPYTIRIVSDILESNGSSSMATVCAGSLALMDAGISIRSAVSGIAMGLLMDEQTGKHAILSDILGDEDALGDMDFKVAGTAKGITACQMDIKVSGLTPQLLQKALEQAKAGRLHILGEMNKTITEPKTTYKKHAPSFSTMTIPKNMIGAVIGPSGKIVQEMQRETGTTIIIEEVEGKGIIKFFGPNQEAVQSAEKRVKDIVAEPVVGDVYQGTVKSIVPFGAFVEFMPGKEGLLHISEVKWERIENLDQVLELGEVIPVKLLEIDPKSGKYKLSRKVLLPNPKATEA.

Asp-494 and Asp-500 together coordinate Mg(2+). Positions 561–623 constitute a KH domain; sequence PSFSTMTIPK…EAVQSAEKRV (63 aa). The 70-residue stretch at 633–702 folds into the S1 motif domain; it reads GDVYQGTVKS…KSGKYKLSRK (70 aa).

It belongs to the polyribonucleotide nucleotidyltransferase family. Mg(2+) serves as cofactor.

It is found in the cytoplasm. The catalysed reaction is RNA(n+1) + phosphate = RNA(n) + a ribonucleoside 5'-diphosphate. Functionally, involved in mRNA degradation. Catalyzes the phosphorolysis of single-stranded polyribonucleotides processively in the 3'- to 5'-direction. This Amoebophilus asiaticus (strain 5a2) protein is Polyribonucleotide nucleotidyltransferase.